We begin with the raw amino-acid sequence, 154 residues long: Large ribosomal subunit protein uL30 (154 aa).

The segment at 114–139 is disordered; it reads PVLRLHPPRGGHRGQKHPTAEGGQIG. Residues 119 to 129 show a composition bias toward basic residues; it reads HPPRGGHRGQK.

The protein belongs to the universal ribosomal protein uL30 family. In terms of assembly, part of the 50S ribosomal subunit.

This is Large ribosomal subunit protein uL30 from Haloquadratum walsbyi (strain DSM 16790 / HBSQ001).